The sequence spans 128 residues: MKTVLLFLVALAAAAGPAQALRCHVCTSSSNCKKPQVCSASSSFCKTVIRVEPLSGNLVEKNCSVWCTPTNNQQGQVSKGQETTLCCNSDLCNEALQSWQSAAPARTSAHLGLALACGLLALLWAPGL.

Residues 1–20 (MKTVLLFLVALAAAAGPAQA) form the signal peptide. In terms of domain architecture, UPAR/Ly6 spans 21–108 (LRCHVCTSSS…WQSAAPARTS (88 aa)). Intrachain disulfides connect cysteine 23-cysteine 45, cysteine 26-cysteine 32, cysteine 38-cysteine 63, cysteine 67-cysteine 86, and cysteine 87-cysteine 92. The GPI-anchor amidated serine moiety is linked to residue serine 98. Residues 99-128 (WQSAAPARTSAHLGLALACGLLALLWAPGL) constitute a propeptide, removed in mature form.

Its subcellular location is the cell membrane. Functionally, may act as a specification marker at earliest stage specification of lymphocytes between B- and T-cell development. Marks the earliest stage of B-cell specification. This chain is Lymphocyte antigen 6D (LY6D), found in Bos taurus (Bovine).